The sequence spans 835 residues: Axin-1 (835 aa).

A disordered region spans residues 16-60 (LGSSFTEDAPRPPVPGEEGDLVSSDGRQYNHSFYSSKSDSLKNEA). Residues 40 to 53 (DGRQYNHSFYSSKS) are compositionally biased toward polar residues. The 123-residue stretch at 92–214 (SLHSLLDDQD…LKSDIYLEYT (123 aa)) folds into the RGS domain. The segment at 318 to 349 (ATSANDSEQQSMSSDADTLSLTDSSVDGVPPY) is disordered. Low complexity predominate over residues 328-344 (SMSSDADTLSLTDSSVD). The tract at residues 351-436 (YRKPHRREIH…DADISTGPSL (86 aa)) is interaction with GSK3B. Residues 437-512 (ANHRVPPAVH…SPDGLPAGKI (76 aa)) are interaction with beta-catenin. Disordered stretches follow at residues 485-530 (KTPG…QARQ) and 602-627 (GYSS…FEMR). Over residues 616-627 (RKGEDGRNFEMR) the composition is skewed to basic and acidic residues. Residues 753-835 (CENITVAYYF…KIIGKVEKVD (83 aa)) enclose the DIX domain.

Homodimer. Interacts with dixdc1. Interacts with hwa; leading to promote the tankyrase-mediated degradation of axin1. Post-translationally, ADP-ribosylated by tankyrase tnks and tnks2. Poly-ADP-ribosylated protein is recognized by rnf146, followed by ubiquitination at 'Lys-48' and subsequent activation of the Wnt signaling pathway. In terms of processing, ubiquitinated by rnf146 when poly-ADP-ribosylated, leading to its degradation and subsequent activation of the Wnt signaling pathway.

Its subcellular location is the cytoplasm. It is found in the nucleus. The protein localises to the membrane. It localises to the cell membrane. Component of the beta-catenin destruction complex required for regulating ctnnb1 levels through phosphorylation and ubiquitination, and modulating Wnt-signaling. Controls dorsoventral patterning via two opposing effects: down-regulates ctnnb1 to inhibit the Wnt signaling pathway and ventralize embryos, but also dorsalizes embryos by activating a Wnt-independent JNK signaling pathway. The protein is Axin-1 (axin1) of Danio rerio (Zebrafish).